The following is a 427-amino-acid chain: Phosphoribosylamine--glycine ligase (427 aa).

Residues 107-312 enclose the ATP-grasp domain; that stretch reads KDLCARFNIP…LLALVNAAVD (206 aa). 133–193 contacts ATP; that stretch reads IRQQGAPIVV…EEFLDGEEAS (61 aa). Mg(2+) contacts are provided by Glu-282 and Asn-284.

Belongs to the GARS family. The cofactor is Mg(2+). Mn(2+) serves as cofactor.

The enzyme catalyses 5-phospho-beta-D-ribosylamine + glycine + ATP = N(1)-(5-phospho-beta-D-ribosyl)glycinamide + ADP + phosphate + H(+). It functions in the pathway purine metabolism; IMP biosynthesis via de novo pathway; N(1)-(5-phospho-D-ribosyl)glycinamide from 5-phospho-alpha-D-ribose 1-diphosphate: step 2/2. The protein is Phosphoribosylamine--glycine ligase of Brucella melitensis biotype 1 (strain ATCC 23456 / CCUG 17765 / NCTC 10094 / 16M).